The sequence spans 259 residues: Global transcriptional regulator CodY (259 aa).

The GAF domain stretch occupies residues Met1–Leu155. The H-T-H motif DNA-binding region spans Ala203–Arg222. Residue Ser215 is modified to Phosphoserine.

It belongs to the CodY family.

The protein resides in the cytoplasm. DNA-binding global transcriptional regulator which is involved in the adaptive response to starvation and acts by directly or indirectly controlling the expression of numerous genes in response to nutrient availability. During rapid exponential growth, CodY is highly active and represses genes whose products allow adaptation to nutrient depletion. In Geobacillus kaustophilus (strain HTA426), this protein is Global transcriptional regulator CodY.